The chain runs to 141 residues: Hemoglobin subunit alpha-1/2 (141 aa).

The Globin domain maps to 1–141 (VLSPADKTNV…VSTVLTSKYR (141 aa)). The residue at position 3 (serine 3) is a Phosphoserine. An N6-succinyllysine modification is found at lysine 7. Threonine 8 bears the Phosphothreonine mark. Lysine 11 is modified (N6-succinyllysine). At lysine 16 the chain carries N6-acetyllysine; alternate. Lysine 16 is modified (N6-succinyllysine; alternate). The residue at position 24 (tyrosine 24) is a Phosphotyrosine. Serine 35 is subject to Phosphoserine. An N6-succinyllysine modification is found at lysine 40. Serine 49 carries the post-translational modification Phosphoserine. Histidine 58 is a binding site for O2. Histidine 87 serves as a coordination point for heme b. At serine 102 the chain carries Phosphoserine. Threonine 108 carries the post-translational modification Phosphothreonine. Serine 124 and serine 131 each carry phosphoserine. 2 positions are modified to phosphothreonine: threonine 134 and threonine 137. Position 138 is a phosphoserine (serine 138).

This sequence belongs to the globin family. Heterotetramer of two alpha chains and two beta chains. In terms of tissue distribution, red blood cells.

Functionally, involved in oxygen transport from the lung to the various peripheral tissues. The protein is Hemoglobin subunit alpha-1/2 of Macaca sinica (Toque macaque).